The primary structure comprises 391 residues: Phosphopentomutase (391 aa).

The Mn(2+) site is built by Asp12, Asp285, His290, Asp326, His327, and His338.

It belongs to the phosphopentomutase family. Requires Mn(2+) as cofactor.

It localises to the cytoplasm. The catalysed reaction is 2-deoxy-alpha-D-ribose 1-phosphate = 2-deoxy-D-ribose 5-phosphate. It carries out the reaction alpha-D-ribose 1-phosphate = D-ribose 5-phosphate. Its pathway is carbohydrate degradation; 2-deoxy-D-ribose 1-phosphate degradation; D-glyceraldehyde 3-phosphate and acetaldehyde from 2-deoxy-alpha-D-ribose 1-phosphate: step 1/2. Functionally, isomerase that catalyzes the conversion of deoxy-ribose 1-phosphate (dRib-1-P) and ribose 1-phosphate (Rib-1-P) to deoxy-ribose 5-phosphate (dRib-5-P) and ribose 5-phosphate (Rib-5-P), respectively. The sequence is that of Phosphopentomutase from Herpetosiphon aurantiacus (strain ATCC 23779 / DSM 785 / 114-95).